Consider the following 781-residue polypeptide: Catenin beta-1 (781 aa).

Position 2 is an N-acetylalanine (Ala2). The interval 2–23 (ATQADLMELDMAMEPDRKAAVS) is interaction with VCL. A Phosphoserine; by GSK3-beta; alternate modification is found at Ser23. Residue Ser23 is glycosylated (O-linked (GlcNAc) serine; alternate). At Ser29 the chain carries Phosphoserine; by GSK3-beta. Phosphoserine; by GSK3-beta and HIPK2 occurs at positions 33 and 37. The segment at 34 to 57 (GIHSGATTTAPSLSGKGNPEEEDV) is disordered. Phosphothreonine; by GSK3-beta is present on Thr41. At Ser45 the chain carries Phosphoserine. Lys49 bears the N6-acetyllysine mark. Tyr64 is subject to Phosphotyrosine; by PTK6. Tyr142 carries the phosphotyrosine; by FYN and PTK6 modification. 12 ARM repeats span residues 151–191 (RAIP…IMRS), 193–234 (QMVS…IFKS), 235–276 (GGIP…VRLA), 277–318 (GGLQ…ILAS), 319–360 (GGPQ…IVEA), 361–389 (GGMQ…RNLS), 400–441 (GLLG…VCQV), 442–484 (GGIE…AQNA), 489–530 (YGLP…LREQ), 531–571 (GAIP…EIVE), 594–636 (NTIP…AEGA), and 637–666 (TAPL…SEDK). Positions 156–178 (LTKLLNDEDQVVVNKAAVMVHQL) are interaction with BCL9. Position 191 is a phosphoserine; by CDK5 (Ser191). Position 246 is a phosphoserine; by CDK5 (Ser246). A Phosphotyrosine; by PTK6 modification is found at Tyr331. Phosphotyrosine; by SRC and PTK6 is present on Tyr333. Ser552 is modified (phosphoserine). Residue Thr556 is modified to (Microbial infection) Phosphothreonine. A Phosphothreonine modification is found at Thr556. Cys619 carries the post-translational modification S-nitrosocysteine. At Ser675 the chain carries Phosphoserine. A disordered region spans residues 705–781 (EPLGYRQDDP…NQLAWFDTDL (77 aa)). The span at 734–745 (MMEHEMGGHHPG) shows a compositional bias: basic and acidic residues. The interaction with SCRIB stretch occupies residues 772–781 (NQLAWFDTDL).

Belongs to the beta-catenin family. As to quaternary structure, two separate complex-associated pools are found in the cytoplasm. The majority is present as component of an E-cadherin:catenin adhesion complex composed of at least E-cadherin/CDH1 and beta-catenin/CTNNB1, and possibly alpha-catenin/CTNNA1; the complex is located to adherens junctions. The stable association of CTNNA1 is controversial as CTNNA1 was shown not to bind to F-actin when assembled in the complex. Alternatively, the CTNNA1-containing complex may be linked to F-actin by other proteins such as LIMA1. Another cytoplasmic pool is part of a large complex containing AXIN1, AXIN2, APC, CSNK1A1 and GSK3B that promotes phosphorylation on N-terminal Ser and Thr residues and ubiquitination of CTNNB1 via BTRC and its subsequent degradation by the proteasome. Wnt-dependent activation of DVL antagonizes the action of GSK3B. When GSK3B activity is inhibited the complex dissociates, CTNNB1 is dephosphorylated and is no longer targeted for destruction. The stabilized protein translocates to the nucleus, where it binds TCF/LEF-1 family members, BCL9, BCL9L and possibly also RUVBL1 and CHD8. Binds CTNNBIP and EP300. CTNNB1 forms a ternary complex with LEF1 and EP300 that is disrupted by CTNNBIP1 binding. Interacts with TAX1BP3 (via the PDZ domain); this interaction inhibits the transcriptional activity of CTNNB1. Interacts with AJAP1, BAIAP1, CARM1, CTNNA3, CXADR and PCDH11Y. Binds NHERF1. Interacts with GLIS2 and MUC1. Interacts with SLC30A9. Interacts with XIRP1. Interacts directly with AXIN1; the interaction is regulated by CDK2 phosphorylation of AXIN1. Interacts with SCRIB. Interacts with RAPGEF2. Interacts with PTPRU (via the cytoplasmic juxtamembrane domain). Interacts with EMD. Interacts with TNIK and TCF7L2. Interacts with SESTD1 and TRPC4. Interacts with CAV1. Interacts with TRPV4. The TRPV4 and CTNNB1 complex can interact with CDH1. Interacts with VCL. Interacts with PTPRJ. Interacts with PKT7 and CDK2. Interacts with FAT1 (via the cytoplasmic domain). Interacts with NANOS1 and NDRG2. Interacts with isoform 1 of NEK2. Interacts with both isoform 1 and isoform 2 of CDK5. Interacts with PTK6. Interacts with SOX7; this interaction may lead to proteasomal degradation of active CTNNB1 and thus inhibition of Wnt/beta-catenin-stimulated transcription. Identified in a complex with HINT1 and MITF. Interacts with FHIT. The CTNNB1 and TCF7L2/TCF4 complex interacts with PML (isoform PML-4). Interacts with FERMT2. Identified in a complex with TCF7L2/TCF4 and FERMT2. Interacts with RORA. May interact with P-cadherin/CDH3. Interacts with RNF220. Interacts with CTNND2. Interacts (via the C-terminal region) with CBY1. The complex composed, at least, of APC, CTNNB1 and GSK3B interacts with JPT1; the interaction requires the inactive form of GSK3B (phosphorylated at 'Ser-9'). Interacts with DLG5. Interacts with FAM53B; promoting translocation to the nucleus. Interacts with TMEM170B. Interacts with AHI1. Interacts with GID8. Component of an cadherin:catenin adhesion complex composed of at least of CDH26, beta-catenin/CTNNB1, alpha-catenin/CTNNA1 and p120 catenin/CTNND1. Forms a complex comprising APPL1, RUVBL2, APPL2, HDAC1 and HDAC2. Interacts with IRF2BPL; mediates the ubiquitination and degradation of CTNNB1. Interacts with AMFR. Interacts with LMBR1L. Interacts with SOX30; prevents interaction of CTNNB1 with TCF7L2/TCF4 and leads to inhibition of Wnt signaling. Interacts with SOX9; inhibiting CTNNB1 activity by competing with the binding sites of TCF/LEF within CTNNB1, thereby inhibiting the Wnt signaling. Interacts with SPN/CD43 cytoplasmic tail. Interacts (when phosphorylated at Tyr-333) with isoform M2 of PKM (PKM2); promoting transcription activation. Interacts with PKP2 (via HEAD domain). Interacts with CDH1. Interacts (when unphosphorylated) with FLYWCH1, perhaps preventing interaction of CTNNB1 with TCF4, and thereby regulating transcription activation; phosphorylation of CTNNB1 may inhibit the interaction. Interacts (via the central armadillo domains) with probable transcriptional regulator ADNP (via N-terminal region); interaction is direct and stabilizes CTNNB1 by modulating its phosphorylation by glycogen synthase kinase-3 beta GSK3B. Interacts with NR5A2. Interacts with DSG2; the interaction promotes localization of CTNNB1 at cell junctions thus reducing its nuclear localization and subsequent transcription of CTNNB1/TCF-target genes. In terms of assembly, (Microbial infection) Interacts with herpes virus 8 protein vPK; this interaction inhibits the Wnt signaling pathway. Phosphorylation at Ser-552 by AMPK promotes stabilization of the protein, enhancing TCF/LEF-mediated transcription. Phosphorylation by GSK3B requires prior phosphorylation of Ser-45 by another kinase. Phosphorylation proceeds then from Thr-41 to Ser-37 and Ser-33. Phosphorylated by NEK2. EGF stimulates tyrosine phosphorylation. Phosphorylated on Ser-33 and Ser-37 by HIPK2 and GSK3B, this phosphorylation triggers proteasomal degradation. Phosphorylation on Ser-191 and Ser-246 by CDK5. Phosphorylation by CDK2 regulates insulin internalization. Phosphorylation by PTK6 at Tyr-64, Tyr-142, Tyr-331 and/or Tyr-333 with the predominant site at Tyr-64 is not essential for inhibition of transcriptional activity. Phosphorylation by SRC at Tyr-333 promotes interaction with isoform M2 of PKM (PKM2); promoting transcription activation. In terms of processing, ubiquitinated by the SCF(BTRC) E3 ligase complex when phosphorylated by GSK3B, leading to its degradation. Ubiquitinated by a E3 ubiquitin ligase complex containing UBE2D1, SIAH1, CACYBP/SIP, SKP1, APC and TBL1X, leading to its subsequent proteasomal degradation. Ubiquitinated and degraded following interaction with SOX9. Ubiquitinated via 'Lys-11'- and 'Lys-29'-linked ubiquitin chains by UBR5, leading to its stabilization. Post-translationally, S-nitrosylation at Cys-619 within adherens junctions promotes VEGF-induced, NO-dependent endothelial cell permeability by disrupting interaction with E-cadherin, thus mediating disassembly adherens junctions. O-glycosylation at Ser-23 decreases nuclear localization and transcriptional activity, and increases localization to the plasma membrane and interaction with E-cadherin CDH1. In terms of processing, deacetylated at Lys-49 by SIRT1. Post-translationally, phosphorylated at Thr-556 by herpes virus 1/HHV-1 leading to CTNNB1 inhibition. In terms of tissue distribution, expressed in several hair follicle cell types: basal and peripheral matrix cells, and cells of the outer and inner root sheaths. Expressed in colon. Present in cortical neurons (at protein level). Expressed in breast cancer tissues (at protein level).

It is found in the cytoplasm. The protein resides in the nucleus. Its subcellular location is the cytoskeleton. The protein localises to the cell junction. It localises to the adherens junction. It is found in the cell membrane. The protein resides in the microtubule organizing center. Its subcellular location is the centrosome. The protein localises to the spindle pole. It localises to the synapse. It is found in the cilium basal body. In terms of biological role, key downstream component of the canonical Wnt signaling pathway. In the absence of Wnt, forms a complex with AXIN1, AXIN2, APC, CSNK1A1 and GSK3B that promotes phosphorylation on N-terminal Ser and Thr residues and ubiquitination of CTNNB1 via BTRC and its subsequent degradation by the proteasome. In the presence of Wnt ligand, CTNNB1 is not ubiquitinated and accumulates in the nucleus, where it acts as a coactivator for transcription factors of the TCF/LEF family, leading to activate Wnt responsive genes. Also acts as a coactivator for other transcription factors, such as NR5A2. Promotes epithelial to mesenchymal transition/mesenchymal to epithelial transition (EMT/MET) via driving transcription of CTNNB1/TCF-target genes. Involved in the regulation of cell adhesion, as component of an E-cadherin:catenin adhesion complex. Acts as a negative regulator of centrosome cohesion. Involved in the CDK2/PTPN6/CTNNB1/CEACAM1 pathway of insulin internalization. Blocks anoikis of malignant kidney and intestinal epithelial cells and promotes their anchorage-independent growth by down-regulating DAPK2. Disrupts PML function and PML-NB formation by inhibiting RANBP2-mediated sumoylation of PML. Promotes neurogenesis by maintaining sympathetic neuroblasts within the cell cycle. Involved in chondrocyte differentiation via interaction with SOX9: SOX9-binding competes with the binding sites of TCF/LEF within CTNNB1, thereby inhibiting the Wnt signaling. Acts as a positive regulator of odontoblast differentiation during mesenchymal tooth germ formation, via promoting the transcription of differentiation factors such as LEF1, BMP2 and BMP4. Activity is repressed in a MSX1-mediated manner at the bell stage of mesenchymal tooth germ formation which prevents premature differentiation of odontoblasts. In Homo sapiens (Human), this protein is Catenin beta-1.